Consider the following 317-residue polypeptide: Taste receptor type 2 member 14 (317 aa).

Over 1-7 the chain is Extracellular; the sequence is MGGVIKS. Residues 8 to 28 traverse the membrane as a helical segment; it reads IFTFVLIVEFIIGNLGNSFIA. Residues 29–55 lie on the Cytoplasmic side of the membrane; sequence LVNCIDWVKGRKISSVDRILTALAISR. A helical membrane pass occupies residues 56–76; sequence ISLVWLIFGSWCVSVFFPALF. Residues 77 to 87 are Extracellular-facing; the sequence is ATEKMFRMLTN. Cholesterol is bound by residues threonine 86 and tryptophan 89. Residues 88–108 form a helical membrane-spanning segment; the sequence is IWTVINHFSVWLATGLGTFYF. Topologically, residues 109–129 are cytoplasmic; that stretch reads LKIANFSNSIFLYLKWRVKKV. A helical membrane pass occupies residues 130–150; the sequence is VLVLLLVTSVFLFLNIALINI. The Extracellular segment spans residues 151–184; it reads HINASINGYRRNKTCSSDSSNFTRFSSLIVLTST. Residues asparagine 153, asparagine 162, and asparagine 171 are each glycosylated (N-linked (GlcNAc...) asparagine). Valine 180 serves as a coordination point for cholesterol. A helical transmembrane segment spans residues 185–205; it reads VFIFIPFTLSLAMFLLLIFSM. The Cytoplasmic portion of the chain corresponds to 206 to 232; the sequence is WKHRKKMQHTVKISGDASTKAHRGVKS. Residues 233 to 253 form a helical membrane-spanning segment; the sequence is VITFFLLYAIFSLSFFISVWT. Residues 254–261 are Extracellular-facing; it reads SERLEENL. The chain crosses the membrane as a helical span at residues 262–282; sequence IILSQVMGMAYPSCHSCVLIL. Cholesterol contacts are provided by serine 265 and methionine 268. Over 283 to 317 the chain is Cytoplasmic; sequence GNKKLRQASLSVLLWLRYMFKDGEPSGHKEFRESS.

Belongs to the G-protein coupled receptor T2R family. As to quaternary structure, core component of the TAS2R14-GNAI1 complex, consisting of TAS2R14, GNAI1, GNB1 and GNG2; within the complex interacts with GNAI1. Core component of the TAS2R14-GNAT3 complex, consisting of TAS2R14, GNAT3, GNB1 and GNG2; within the complex interacts with GNAT3. Core component of the TAS2R14-GNAS2 complex, consisting of TAS2R14, GNAS2, GNB1 and GNG2; within the complex interacts with GNAS2. Highly expressed in cerebellum, pancreas, small intestine and thymus; also expressed in adipose, aorta, skin and tongue, but at significantly lower levels. Expressed in subsets of taste receptor cells of the tongue and palate epithelium and exclusively in gustducin-positive cells. Expressed in testis.

The protein localises to the membrane. The enzyme catalyses Ca(2+)(in) = Ca(2+)(out). The catalysed reaction is 3',5'-cyclic AMP(in) = 3',5'-cyclic AMP(out). With respect to regulation, basal activity is enhanced by binding to bitter tastants, such as flufenamic acid and aristolochic acid. Regulated by cholesterol in a concentration-dependent manner. Gustducin-linked G-protein coupled receptor that plays a role in the perception of bitterness. The activity of this receptor stimulates GNAT3, activating the gustducin G-protein pathway. Likely plays a role in sensing the chemical composition of the gastrointestinal content and other extra-oral tissues via the inhibitory G-protein pathways. The sequence is that of Taste receptor type 2 member 14 (TAS2R14) from Homo sapiens (Human).